Consider the following 257-residue polypeptide: MSLIDIQNLTIKNTCEKYLIKGIDLKIFSQQINALIGESGAGKSLIAKALLEYLPFDLSCTYDSYQFDGENISRLSQYYGHTIGYISQNYAESFNDHTKLGKQLTAIYRKHYKSSKEEALSKIDKALSWVNLQSKDILNKYSFQLSGGQLERVYIASVLMLEPKLIIADEPVASLDALNGNQVMDLLQHIVLEHGQTLFIITHNLSHVLKYCQYIYVLKEGQIIERGNINHFKYEHLHPYTERLIKYRTQLKRDYYD.

The ABC transporter domain maps to 4–245 (IDIQNLTIKN…HLHPYTERLI (242 aa)). 37-44 (GESGAGKS) is an ATP binding site.

It belongs to the ABC transporter superfamily. In terms of assembly, the complex is composed of two ATP-binding proteins (NikD and NikE), two transmembrane proteins (NikB and NikC) and a solute-binding protein (NikA).

Its subcellular location is the cell membrane. The catalysed reaction is Ni(2+)(out) + ATP + H2O = Ni(2+)(in) + ADP + phosphate + H(+). Part of the ABC transporter complex NikABCDE (Opp2) involved in nickel import. Probably responsible for energy coupling to the transport system. The sequence is that of Nickel import system ATP-binding protein NikD from Staphylococcus aureus (strain Mu50 / ATCC 700699).